A 1071-amino-acid chain; its full sequence is ATP-dependent helicase/deoxyribonuclease subunit B (1071 aa).

Belongs to the helicase family. AddB/RexB type 2 subfamily. In terms of assembly, heterodimer of AddA and RexB. It depends on Mg(2+) as a cofactor.

In terms of biological role, the heterodimer acts as both an ATP-dependent DNA helicase and an ATP-dependent, dual-direction single-stranded exonuclease. Recognizes the chi site generating a DNA molecule suitable for the initiation of homologous recombination. This subunit has 5' -&gt; 3' nuclease activity but not helicase activity. This Streptococcus pyogenes serotype M6 (strain ATCC BAA-946 / MGAS10394) protein is ATP-dependent helicase/deoxyribonuclease subunit B.